A 305-amino-acid polypeptide reads, in one-letter code: Phosphoribosylaminoimidazole-succinocarboxamide synthase (305 aa).

Belongs to the SAICAR synthetase family.

The catalysed reaction is 5-amino-1-(5-phospho-D-ribosyl)imidazole-4-carboxylate + L-aspartate + ATP = (2S)-2-[5-amino-1-(5-phospho-beta-D-ribosyl)imidazole-4-carboxamido]succinate + ADP + phosphate + 2 H(+). It participates in purine metabolism; IMP biosynthesis via de novo pathway; 5-amino-1-(5-phospho-D-ribosyl)imidazole-4-carboxamide from 5-amino-1-(5-phospho-D-ribosyl)imidazole-4-carboxylate: step 1/2. The chain is Phosphoribosylaminoimidazole-succinocarboxamide synthase from Tropheryma whipplei (strain Twist) (Whipple's bacillus).